A 70-amino-acid chain; its full sequence is Small integral membrane protein 42 (70 aa).

Residues 26–46 (LVNVLFFFTPLMTLVTLLILV) traverse the membrane as a helical segment.

The protein resides in the membrane. The chain is Small integral membrane protein 42 from Homo sapiens (Human).